The primary structure comprises 440 residues: Aclacinomycin-T 2-deoxy-L-fucose transferase (440 aa).

It catalyses the reaction dTDP-2-deoxy-beta-L-fucose + aclacinomycin T = aclacinomycin S + dTDP + H(+). In terms of biological role, involved in the biosynthesis of the trisaccharide moiety characteristic of the antitumor drug aclacinomycins. In the first reaction, AknK catalyzes the transfer of 2-deoxy-beta-L-fucose from the activated donor dTDP-2-deoxy-beta-L-fucose to the mono-glycosylated aclacinomycin T (rhodosaminyl aklavinone), forming the di-glycosylated aclacinomycin S (L-2-deoxyfucosyl-L-rhodosaminyl aklavinone). It can also catalyze the addition of an alternate dTDP-L-sugar, dTDP-L-daunosamine, to aclacinomycin T and the addition of 2-deoxy-beta-L-fucose to the mono-glycosylated aglycones (monoglycosylated anthracyclines) such as daunomycin (daunorubicin), adriamycin (doxorubicin) and idarubicin. In vitro, AknK also catalyzes the addition of a second L-2-deoxyfucosyl moiety from dTDP-2-deoxy-beta-L-fucose, albeit with reduced activity, to the natural disaccharide chain of aclacinomycin S to produce L-deoxyfucosyl-L-deoxyfucosyl-L-rhodosaminyl aklavinone (2-deoxy-alpha-D-fucosyl-aclacinomycin S), a variant of the natural aclacinomycin A. The chain is Aclacinomycin-T 2-deoxy-L-fucose transferase from Streptomyces galilaeus.